Here is a 265-residue protein sequence, read N- to C-terminus: Type 1 encapsulin shell protein (265 aa).

The protein belongs to the encapsulin family. Family 1 subfamily. As to quaternary structure, multimeric. The encapsulin nanocompartment is formed by 60 subunits. Monomers form pentamers which assemble to form shells. There are 12 pores where the pentamers meet as well as 3-fold axis channels and dimer channels; none are larger than 3-4 Angstroms in diameter. The N-terminus of the protein is inside the shell, the C-terminus is outside. The initiator methionine is partially removed. When isolated from culture filtrate isoelectric focusing gives 3 bands, none of which are glycosylated.

It localises to the encapsulin nanocompartment. It is found in the secreted. The protein resides in the cell membrane. Shell component of a type 1 encapsulin nanocompartment in situ; its cargo protects against oxidative stress at low pH. In situ and in E.coli assembles into proteinaceous shells about 22 nm in diameter with 2.5 nm thick walls. Cargo proteins are targeted to the interior via their C-terminal extensions; empty intact shells can be isolated in E.coli in the absence of cargo protein. There are at least 4 possible cargo proteins, DyP (encoded in the same locus), FolB, BfrB and Rv1762c; DyP and Rv1762c have been identified in vivo. Probably involved in protection against oxidative damage from the host immune response. A T-cell antigen found in bacterial culture cell filtrates, stimulates mouse immune response. Does not have detectable bacteriocin activity. The protein is Type 1 encapsulin shell protein of Mycobacterium tuberculosis (strain ATCC 25618 / H37Rv).